Reading from the N-terminus, the 219-residue chain is UPF0173 metal-dependent hydrolase Mlab_1154 (219 aa).

Belongs to the UPF0173 family.

This is UPF0173 metal-dependent hydrolase Mlab_1154 from Methanocorpusculum labreanum (strain ATCC 43576 / DSM 4855 / Z).